Reading from the N-terminus, the 463-residue chain is Methionine aminopeptidase 2-1 (463 aa).

Residues 1-12 (MGSKTPDGHRQG) show a composition bias toward basic and acidic residues. Residues 1–96 (MGSKTPDGHR…SGQQTTPPRV (96 aa)) are disordered. Acidic residues predominate over residues 41–53 (SGEDDEDGDDDEE). Residues 58-67 (DLNSRAQPNN) show a composition bias toward polar residues. The segment covering 70-85 (KKRKRKNNKKKKKKRP) has biased composition (basic residues). Histidine 215 is a substrate binding site. A divalent metal cation is bound by residues aspartate 236, aspartate 247, and histidine 316. Histidine 324 contributes to the substrate binding site. 2 residues coordinate a divalent metal cation: glutamate 349 and glutamate 444.

This sequence belongs to the peptidase M24A family. Methionine aminopeptidase eukaryotic type 2 subfamily. Co(2+) is required as a cofactor. Requires Zn(2+) as cofactor. The cofactor is Mn(2+). It depends on Fe(2+) as a cofactor.

It is found in the cytoplasm. It catalyses the reaction Release of N-terminal amino acids, preferentially methionine, from peptides and arylamides.. In terms of biological role, cotranslationally removes the N-terminal methionine from nascent proteins. The N-terminal methionine is often cleaved when the second residue in the primary sequence is small and uncharged (Met-Ala-, Cys, Gly, Pro, Ser, Thr, or Val). This is Methionine aminopeptidase 2-1 from Arthroderma otae (strain ATCC MYA-4605 / CBS 113480) (Microsporum canis).